The sequence spans 400 residues: Deoxyguanosinetriphosphate triphosphohydrolase-like protein (400 aa).

One can recognise an HD domain in the interval R73–N215.

The protein belongs to the dGTPase family. Type 2 subfamily.

This is Deoxyguanosinetriphosphate triphosphohydrolase-like protein from Bartonella quintana (strain Toulouse) (Rochalimaea quintana).